The chain runs to 1466 residues: ABC transporter C family member 6 (1466 aa).

10 consecutive transmembrane segments (helical) span residues 16–36 (SVLS…SWLF), 63–83 (LVLI…LLSC), 91–111 (WPFL…VYLF), 128–148 (VWWV…FVLY), 158–178 (FVIS…SCLW), 286–306 (IVLS…APYL), 322–339 (NQGY…LVEC), 400–420 (WFMH…WILY), 425–445 (LGSI…YPFA), and 512–532 (SVLW…CLLL). In terms of domain architecture, ABC transmembrane type-1 1 spans 286 to 567 (IVLSALLAFV…LPETISMIVQ (282 aa)). The region spanning 601–824 (VEISNGTFSW…GTDFMELVGA (224 aa)) is the ABC transporter 1 domain. 636–643 (GTVGSGKS) is a binding site for ATP. Positions 840-876 (ASEKSTTDKENEVLHHKEKQENGSDNKPSGQLVQEEE) are disordered. Residues 844–863 (STTDKENEVLHHKEKQENGS) show a composition bias toward basic and acidic residues. 3 helical membrane-spanning segments follow: residues 890 to 910 (YMAL…QVLF), 937 to 957 (GFTL…CILI), and 1026 to 1046 (ILGI…VFIP). An ABC transmembrane type-1 2 domain is found at 900 to 1182 (IPLILVVQVL…LIWTLCDLEN (283 aa)). Residues 1219–1453 (ITICNLQVRY…RSSLFSKLVA (235 aa)) form the ABC transporter 2 domain. An ATP-binding site is contributed by 1253-1260 (GRTGCGKS).

The protein belongs to the ABC transporter superfamily. ABCC family. Conjugate transporter (TC 3.A.1.208) subfamily. As to expression, ubiquitous.

The protein localises to the membrane. The enzyme catalyses ATP + H2O + xenobioticSide 1 = ADP + phosphate + xenobioticSide 2.. Pump for glutathione S-conjugates. This chain is ABC transporter C family member 6 (ABCC6), found in Arabidopsis thaliana (Mouse-ear cress).